Here is a 357-residue protein sequence, read N- to C-terminus: UDP-N-acetylglucosamine--N-acetylmuramyl-(pentapeptide) pyrophosphoryl-undecaprenol N-acetylglucosamine transferase (357 aa).

UDP-N-acetyl-alpha-D-glucosamine-binding positions include 13 to 15, Asn125, Arg161, Ser189, Ile243, and Gln288; that span reads TGG.

This sequence belongs to the glycosyltransferase 28 family. MurG subfamily.

The protein resides in the cell inner membrane. It catalyses the reaction di-trans,octa-cis-undecaprenyl diphospho-N-acetyl-alpha-D-muramoyl-L-alanyl-D-glutamyl-meso-2,6-diaminopimeloyl-D-alanyl-D-alanine + UDP-N-acetyl-alpha-D-glucosamine = di-trans,octa-cis-undecaprenyl diphospho-[N-acetyl-alpha-D-glucosaminyl-(1-&gt;4)]-N-acetyl-alpha-D-muramoyl-L-alanyl-D-glutamyl-meso-2,6-diaminopimeloyl-D-alanyl-D-alanine + UDP + H(+). It participates in cell wall biogenesis; peptidoglycan biosynthesis. Cell wall formation. Catalyzes the transfer of a GlcNAc subunit on undecaprenyl-pyrophosphoryl-MurNAc-pentapeptide (lipid intermediate I) to form undecaprenyl-pyrophosphoryl-MurNAc-(pentapeptide)GlcNAc (lipid intermediate II). This chain is UDP-N-acetylglucosamine--N-acetylmuramyl-(pentapeptide) pyrophosphoryl-undecaprenol N-acetylglucosamine transferase, found in Bordetella pertussis (strain Tohama I / ATCC BAA-589 / NCTC 13251).